A 478-amino-acid polypeptide reads, in one-letter code: Glutamyl-tRNA(Gln) amidotransferase subunit A (478 aa).

Residues K68 and S143 each act as charge relay system in the active site. Catalysis depends on S167, which acts as the Acyl-ester intermediate.

The protein belongs to the amidase family. GatA subfamily. In terms of assembly, heterotrimer of A, B and C subunits.

It carries out the reaction L-glutamyl-tRNA(Gln) + L-glutamine + ATP + H2O = L-glutaminyl-tRNA(Gln) + L-glutamate + ADP + phosphate + H(+). Functionally, allows the formation of correctly charged Gln-tRNA(Gln) through the transamidation of misacylated Glu-tRNA(Gln) in organisms which lack glutaminyl-tRNA synthetase. The reaction takes place in the presence of glutamine and ATP through an activated gamma-phospho-Glu-tRNA(Gln). The protein is Glutamyl-tRNA(Gln) amidotransferase subunit A (gatA) of Mycoplasma pneumoniae (strain ATCC 29342 / M129 / Subtype 1) (Mycoplasmoides pneumoniae).